The chain runs to 187 residues: Insulin-like growth factor 2 (187 aa).

An N-terminal signal peptide occupies residues 1-23; it reads MCAARQILLLLLAFLAYALDSAA. The interval 25-51 is b; sequence YGTAETLCGGELVDTLQFVCGDRGFYF. 3 disulfide bridges follow: Cys-32–Cys-71, Cys-44–Cys-84, and Cys-70–Cys-75. The tract at residues 52-64 is c; that stretch reads SRPVGRNNRRINR. The a stretch occupies residues 64–85; the sequence is RGIVEECCFRSCDLALLETYCA. A d region spans residues 86–91; it reads KSVKSE. A propeptide spans 92-187 (e peptide); sequence RDLSATSLAG…ASPEATGPQE (96 aa). Residues 162-187 form a disordered region; that stretch reads HRPLISLPSQRPPAPRASPEATGPQE.

Belongs to the insulin family.

It localises to the secreted. Functionally, the insulin-like growth factors, isolated from plasma, are structurally and functionally related to insulin but have a much higher growth-promoting activity. Acts as a ligand for integrin which is required for IGF2 signaling. The protein is Insulin-like growth factor 2 of Gallus gallus (Chicken).